A 418-amino-acid polypeptide reads, in one-letter code: Serine--tRNA ligase (418 aa).

Residue threonine 231 to glutamate 233 coordinates L-serine. Residue arginine 262–glutamate 264 coordinates ATP. Residue glutamate 285 participates in L-serine binding. Glutamate 349–serine 352 is a binding site for ATP. Serine 385 serves as a coordination point for L-serine.

The protein belongs to the class-II aminoacyl-tRNA synthetase family. Type-1 seryl-tRNA synthetase subfamily. Homodimer. The tRNA molecule binds across the dimer.

Its subcellular location is the cytoplasm. The catalysed reaction is tRNA(Ser) + L-serine + ATP = L-seryl-tRNA(Ser) + AMP + diphosphate + H(+). The enzyme catalyses tRNA(Sec) + L-serine + ATP = L-seryl-tRNA(Sec) + AMP + diphosphate + H(+). It functions in the pathway aminoacyl-tRNA biosynthesis; selenocysteinyl-tRNA(Sec) biosynthesis; L-seryl-tRNA(Sec) from L-serine and tRNA(Sec): step 1/1. Functionally, catalyzes the attachment of serine to tRNA(Ser). Is also able to aminoacylate tRNA(Sec) with serine, to form the misacylated tRNA L-seryl-tRNA(Sec), which will be further converted into selenocysteinyl-tRNA(Sec). This is Serine--tRNA ligase from Ureaplasma urealyticum serovar 10 (strain ATCC 33699 / Western).